The following is a 178-amino-acid chain: Large ribosomal subunit protein uL10 (178 aa).

Belongs to the universal ribosomal protein uL10 family. Part of the ribosomal stalk of the 50S ribosomal subunit. The N-terminus interacts with L11 and the large rRNA to form the base of the stalk. The C-terminus forms an elongated spine to which L12 dimers bind in a sequential fashion forming a multimeric L10(L12)X complex.

Forms part of the ribosomal stalk, playing a central role in the interaction of the ribosome with GTP-bound translation factors. This chain is Large ribosomal subunit protein uL10, found in Stenotrophomonas maltophilia (strain R551-3).